The chain runs to 335 residues: Probable pectinesterase 29 (335 aa).

A signal peptide spans 1 to 24; sequence MGTHRIFIGLIALCCFCLPHLIEA. Asparagine 43 carries N-linked (GlcNAc...) asparagine glycosylation. The active-site Proton donor is aspartate 166. Catalysis depends on aspartate 187, which acts as the Nucleophile. 2 residues coordinate substrate: arginine 248 and tryptophan 250. Asparagine 262 carries N-linked (GlcNAc...) asparagine glycosylation.

The protein belongs to the pectinesterase family. In terms of tissue distribution, expressed in flower buds.

The protein localises to the secreted. It is found in the cell wall. The enzyme catalyses [(1-&gt;4)-alpha-D-galacturonosyl methyl ester](n) + n H2O = [(1-&gt;4)-alpha-D-galacturonosyl](n) + n methanol + n H(+). It functions in the pathway glycan metabolism; pectin degradation; 2-dehydro-3-deoxy-D-gluconate from pectin: step 1/5. In terms of biological role, acts in the modification of cell walls via demethylesterification of cell wall pectin. This Arabidopsis thaliana (Mouse-ear cress) protein is Probable pectinesterase 29 (PME29).